A 348-amino-acid polypeptide reads, in one-letter code: Eukaryotic translation initiation factor 3 subunit H (348 aa).

The disordered stretch occupies residues 1–25 (MASRKEGSGAAGGGFGASKGKGKAA). Residues 9 to 19 (GAAGGGFGASK) show a composition bias toward gly residues. Residues 35-169 (VQIDGLVVLK…LKAYRLTPKL (135 aa)) enclose the MPN domain. A compositionally biased stretch (low complexity) spans 266–285 (QQQQKHQYQQRRQQENLQRQ). The disordered stretch occupies residues 266 to 304 (QQQQKHQYQQRRQQENLQRQSRGEAPLPEEDINKLFKPP).

It belongs to the eIF-3 subunit H family. In terms of assembly, component of the eukaryotic translation initiation factor 3 (eIF-3) complex, which is composed of 13 subunits: EIF3A, EIF3B, EIF3C, EIF3D, EIF3E, EIF3F, EIF3G, EIF3H, EIF3I, EIF3J, EIF3K, EIF3L and EIF3M.

It is found in the cytoplasm. Functionally, component of the eukaryotic translation initiation factor 3 (eIF-3) complex, which is involved in protein synthesis of a specialized repertoire of mRNAs and, together with other initiation factors, stimulates binding of mRNA and methionyl-tRNAi to the 40S ribosome. The eIF-3 complex specifically targets and initiates translation of a subset of mRNAs involved in cell proliferation. The protein is Eukaryotic translation initiation factor 3 subunit H of Gallus gallus (Chicken).